We begin with the raw amino-acid sequence, 451 residues long: Epstein-Barr nuclear antigen 2 (451 aa).

An SMARCB1/INI1 binding region spans residues 1–176 (MPTFYLALHG…TPPTPLPPAT (176 aa)). Disordered regions lie at residues 52–78 (VGEN…EPSP) and 148–451 (PLSQ…PSIQ). Pro residues-rich tracts occupy residues 154 to 193 (LTPP…PPTP), 252 to 273 (PPMP…PPPG), and 285 to 299 (SGPP…PPQP). Low complexity predominate over residues 300-309 (SKTQGQSRGQ). A compositionally biased stretch (basic residues) spans 310-330 (SRGRGRGRGRGRGKSRDKQRK). 7 repeat units span residues 311–312 (RG), 313–314 (RG), 315–316 (RG), 317–318 (RG), 319–320 (RG), 321–322 (RG), and 323–324 (KS). The 6.5 X 2 AA tandem repeats of R-G stretch occupies residues 311 to 324 (RGRGRGRGRGRGKS). 2 short sequence motifs (PXLXP motif, interaction with host ZMYND11) span residues 347–351 (PELSP) and 401–405 (PILFP).

The protein belongs to the herpesviridae EBNA2 family. In terms of assembly, interacts with human SMARCB1/INI1, presumably generating an open chromatin conformation at the EBNA2-responsive target genes. Interacts with human WAPL. Interacts with host CBF1; this interaction allows transcriptional activation by EBNA2. Interacts with host general transcription factors GTF2B, ERCC2 and ERCC3. Interacts (via PXLXP motif) with host ZMYND11/BS69 (via MYND-type zinc finger). Interacts with host EBF1. Post-translationally, phosphorylated.

Its subcellular location is the host nucleus matrix. Plays a key role in the activation of the host resting B-cell and stimulation of B-cell proliferation. Acts by up-regulating the expression of viral EBNA1-6, LMP1, LMP2A and LMP2B genes, as well as several host genes including CD21, CD23 and MYC. Activates transcription by acting as an adapter molecule that binds to cellular sequence-specific DNA-binding proteins such as host CBF1, SMARCB1 and SPI1. Once EBNA2 is near promoter sites, its acidic activating domain recruits basal and activation-associated transcription factors TFIIB, TAF40, TFIIH components ERCC2 and ERCC3, and CBP in order to promote transcription. Alternatively, EBNA2 can affect activities of cell cycle regulators and retard cell cycle progression at G2/M phase. It also induces chromosomal instability, by disrupting mitotic checkpoints, multi-nucleation and formation of micronuclei in infected cells. In Epstein-Barr virus (strain GD1) (HHV-4), this protein is Epstein-Barr nuclear antigen 2 (EBNA2).